A 904-amino-acid chain; its full sequence is Thiamine diphosphate dependent-3-acetyloctanal synthase PigD (904 aa).

The segment at 879-904 (RKAWAAQQPESTSTAFDQDPTQEATS) is disordered. Over residues 886-904 (QPESTSTAFDQDPTQEATS) the composition is skewed to polar residues.

Belongs to the TPP enzyme family. Requires thiamine diphosphate as cofactor.

It carries out the reaction (2E)-octenal + pyruvate + H(+) = (S)-3-acetyloctanal + CO2. The protein operates within antibiotic biosynthesis; prodigiosin biosynthesis. Functionally, involved in the biosynthesis of 2-methyl-3-n-amyl-pyrrole (MAP), one of the terminal products involved in the biosynthesis of the red antibiotic prodigiosin (Pig). Catalyzes the decarboxylation of pyruvate, followed by the modification of the resulting two-carbon fragment acetaldehyde at the C3 position of the 2-octenal (1,2-addition of acetaldehyde) giving 3-acetyloctanal. In vitro, it can act on a number of alpha,beta-unsaturated carbonyl compounds, including aldehydes and ketones, and can catalyze both 1,2-addition and Stetter-type 1,4-addition depending on the substrate. This chain is Thiamine diphosphate dependent-3-acetyloctanal synthase PigD, found in Serratia marcescens.